The sequence spans 516 residues: 2,3-bisphosphoglycerate-independent phosphoglycerate mutase (516 aa).

Mn(2+)-binding residues include Asp13 and Ser63. The Phosphoserine intermediate role is filled by Ser63. Substrate contacts are provided by residues His124, 154–155, Arg186, Arg192, 262–265, and Lys337; these read RD and RPDR. The Mn(2+) site is built by Asp404, His408, Asp445, His446, and His464.

The protein belongs to the BPG-independent phosphoglycerate mutase family. Monomer. Mn(2+) serves as cofactor.

It catalyses the reaction (2R)-2-phosphoglycerate = (2R)-3-phosphoglycerate. Its pathway is carbohydrate degradation; glycolysis; pyruvate from D-glyceraldehyde 3-phosphate: step 3/5. Functionally, catalyzes the interconversion of 2-phosphoglycerate and 3-phosphoglycerate. The sequence is that of 2,3-bisphosphoglycerate-independent phosphoglycerate mutase from Cellvibrio japonicus (strain Ueda107) (Pseudomonas fluorescens subsp. cellulosa).